We begin with the raw amino-acid sequence, 176 residues long: Large ribosomal subunit protein uL6 (176 aa).

It belongs to the universal ribosomal protein uL6 family. As to quaternary structure, part of the 50S ribosomal subunit.

Its function is as follows. This protein binds to the 23S rRNA, and is important in its secondary structure. It is located near the subunit interface in the base of the L7/L12 stalk, and near the tRNA binding site of the peptidyltransferase center. The protein is Large ribosomal subunit protein uL6 of Shewanella sediminis (strain HAW-EB3).